The sequence spans 72 residues: Large ribosomal subunit protein bL32 (72 aa).

The protein belongs to the bacterial ribosomal protein bL32 family.

The chain is Large ribosomal subunit protein bL32 from Dehalococcoides mccartyi (strain ATCC BAA-2266 / KCTC 15142 / 195) (Dehalococcoides ethenogenes (strain 195)).